A 120-amino-acid polypeptide reads, in one-letter code: Large ribosomal subunit protein bL19 (120 aa).

It belongs to the bacterial ribosomal protein bL19 family.

This protein is located at the 30S-50S ribosomal subunit interface and may play a role in the structure and function of the aminoacyl-tRNA binding site. This Marinomonas sp. (strain MWYL1) protein is Large ribosomal subunit protein bL19.